We begin with the raw amino-acid sequence, 175 residues long: Methylated-DNA--protein-cysteine methyltransferase (175 aa).

2 residues coordinate DNA: Tyr-115 and Arg-127. Cys-144 acts as the Nucleophile; methyl group acceptor in catalysis.

This sequence belongs to the MGMT family.

The protein resides in the nucleus. It catalyses the reaction a 6-O-methyl-2'-deoxyguanosine in DNA + L-cysteinyl-[protein] = S-methyl-L-cysteinyl-[protein] + a 2'-deoxyguanosine in DNA. The enzyme catalyses a 4-O-methyl-thymidine in DNA + L-cysteinyl-[protein] = a thymidine in DNA + S-methyl-L-cysteinyl-[protein]. Its function is as follows. Involved in the cellular defense against the biological effects of O6-methylguanine (O6-MeG) and O4-methylthymine (O4-MeT) in DNA. Repairs the methylated nucleobase in DNA by stoichiometrically transferring the methyl group to a cysteine residue in the enzyme. This is a suicide reaction: the enzyme is irreversibly inactivated. The protein is Methylated-DNA--protein-cysteine methyltransferase (MGT1) of Candida albicans (strain SC5314 / ATCC MYA-2876) (Yeast).